A 448-amino-acid polypeptide reads, in one-letter code: MSFTPGKQSSSRASSGNRSGNGILKWADQSDQSRNVQTRGRRAQPKQTATSQQPSAGNVVPYYSWFSGITQFQKGKEFEFAEGQGVPIAPGVPATEAKGYWYRHNRRSFKTADGNQRQLLPRWYFYYLGTGPHAKDQYGTDIDGVFWVASNQADVNTPADILDRDPSSDEAIPTRFPPGTVLPQGYYIEGSGRSAPNSRSTSRTSSRASSAGSRSRANSGNRTPTSGVTPDMADQIASLVLAKLGKDATKPQQVTKQTAKEIRQKILNKPRQKRSPNKQCTVQQCFGKRGPNQNFGGGEMLKLGTSDPQFPILAELAPTAGAFFFGSRLELAKVQNLSGNLDEPQKDVYELRYNGAIRFDSTLSGFETIMKVLNENLNAYQQQDGMMNMSPKPQRQRGQKNGQGENDNISVAAPKSRVQQNKSRELTAEDISLLKKMDEPFTEDTSEI.

Positions 1–55 (MSFTPGKQSSSRASSGNRSGNGILKWADQSDQSRNVQTRGRRAQPKQTATSQQPS) are disordered. Low complexity predominate over residues 9–22 (SSSRASSGNRSGNG). 2 stretches are compositionally biased toward polar residues: residues 29–38 (QSDQSRNVQT) and 45–55 (PKQTATSQQPS). The interval 52 to 194 (QQPSAGNVVP…GYYIEGSGRS (143 aa)) is RNA-binding. One can recognise a CoV N NTD domain in the interval 61–190 (PYYSWFSGIT…VLPQGYYIEG (130 aa)). Residues Arg-106, Arg-122, and Arg-164 each coordinate RNA. Disordered regions lie at residues 157 to 231 (TPAD…VTPD), 266 to 298 (ILNK…FGGG), and 385 to 448 (GMMN…TSEI). Ser-167 carries the post-translational modification Phosphoserine; by host. Thr-174 carries the post-translational modification Phosphothreonine; by host. Position 191 is a phosphoserine; by host (Ser-191). Over residues 193–223 (RSAPNSRSTSRTSSRASSAGSRSRANSGNRT) the composition is skewed to low complexity. Residues 259-384 (AKEIRQKILN…ENLNAYQQQD (126 aa)) enclose the CoV N CTD domain. Basic residues predominate over residues 266-276 (ILNKPRQKRSP). The interval 266-384 (ILNKPRQKRS…ENLNAYQQQD (119 aa)) is dimerization. Ser-390 is subject to Phosphoserine; by host. The span at 399-409 (QKNGQGENDNI) shows a compositional bias: polar residues. Positions 422–439 (KSRELTAEDISLLKKMDE) are enriched in basic and acidic residues. Ser-423 is modified (phosphoserine; by host). Thr-427 is modified (phosphothreonine; by host).

Belongs to the betacoronavirus nucleocapsid protein family. As to quaternary structure, homooligomer. Both monomeric and oligomeric forms interact with RNA. Interacts with protein M. Interacts with NSP3; this interaction serves to tether the genome to the newly translated replicase-transcriptase complex at a very early stage of infection. ADP-ribosylated. The ADP-ribosylation is retained in the virion during infection. In terms of processing, phosphorylated on serine and threonine residues.

The protein localises to the virion. The protein resides in the host endoplasmic reticulum-Golgi intermediate compartment. Its subcellular location is the host Golgi apparatus. Functionally, packages the positive strand viral genome RNA into a helical ribonucleocapsid (RNP) and plays a fundamental role during virion assembly through its interactions with the viral genome and membrane protein M. Plays an important role in enhancing the efficiency of subgenomic viral RNA transcription as well as viral replication. The sequence is that of Nucleoprotein from Bovine coronavirus (strain LSU-94LSS-051) (BCoV-LSU).